A 343-amino-acid chain; its full sequence is Vacuolar membrane protein Kpol_1003p17 (343 aa).

The disordered stretch occupies residues 45–65 (TTDTSGTSTSSRDVSSGQSTL). Residues 101–121 (FIAVGSIIGGIFGGVLIWWMI) traverse the membrane as a helical segment. Residues 235–343 (EVLQQQRQRR…YLDDMLENDN (109 aa)) form a disordered region. Over residues 254–264 (ELPSTPPSNFK) the composition is skewed to polar residues. Basic and acidic residues predominate over residues 269–280 (KPERSASPERKS). Basic residues predominate over residues 281 to 290 (RSPIRQHRKN).

The protein belongs to the PRM5 family.

It localises to the vacuole membrane. The sequence is that of Vacuolar membrane protein Kpol_1003p17 from Vanderwaltozyma polyspora (strain ATCC 22028 / DSM 70294 / BCRC 21397 / CBS 2163 / NBRC 10782 / NRRL Y-8283 / UCD 57-17) (Kluyveromyces polysporus).